The chain runs to 113 residues: Protein RALF-like 31 (113 aa).

The N-terminal stretch at 1–21 (MFNSTALVIFAILFLLISADA) is a signal peptide. A propeptide spans 22-58 (FPIPSPNGEIDAMLIRNSIIGEDEDLMPTEISRRVLM) (removed in mature form). Intrachain disulfides connect Cys76/Cys86 and Cys98/Cys104.

The protein belongs to the plant rapid alkalinization factor (RALF) family. Proteolytically cleaved, probably by S1P, a subtilisin-like serine protease (subtilase).

The protein resides in the secreted. In terms of biological role, cell signaling peptide that may regulate plant stress, growth, and development. Mediates a rapid alkalinization of extracellular space by mediating a transient increase in the cytoplasmic Ca(2+) concentration leading to a calcium-dependent signaling events through a cell surface receptor and a concomitant activation of some intracellular mitogen-activated protein kinases. The sequence is that of Protein RALF-like 31 (RALFL31) from Arabidopsis thaliana (Mouse-ear cress).